The chain runs to 420 residues: MKKFAAVLGLTVAFAAASQAHAVTLTFACDSVGQGFDECKKGADAWAKKTGNTVKLVQVPKESDARLALYQQQLGAKASDVDVYMIDVVWPGLIGQHLMDLSKSIPAAEVKAHFPAIVQNNTVGGKLIAMPWFTDAGVLYYRTDLLKKYGYNAPPKTWNELATMAQKIQAGERKSNPKFVGYVFQGKNYEGLTCDALEWISSFGGGSIVDPSGKITVNNPKAVQALQAIQGLIGTAAPAAVTTYGEEEARNVWQAGNSAFMRNWPYAYAAGQKEGSPIAGKIGVAALPAGPGGKPAATLGGWQLAVNAYSKNPKEAADLVRYLTGAQEQKRRAVQASYNPTIATLYKDKDVLKAVPFFGSLYDVFTNAVARPATVTGSKYNQVSDAFSSAVYSVLTKKSAPGPALKTLEGQLARIKGRGW.

An N-terminal signal peptide occupies residues 1 to 24; sequence MKKFAAVLGLTVAFAAASQAHAVT.

Belongs to the bacterial solute-binding protein 1 family.

Functionally, probably part of a binding-protein-dependent transport system. This is Probable ABC transporter-binding protein DR_1438 from Deinococcus radiodurans (strain ATCC 13939 / DSM 20539 / JCM 16871 / CCUG 27074 / LMG 4051 / NBRC 15346 / NCIMB 9279 / VKM B-1422 / R1).